The sequence spans 199 residues: MSEQNTNHESPEQNVAHDNIEHSDSILEETMKEFDPQHNSGEEMTIENEIDLDTFKARIAELEGEVKEAKEGTARANAEAYDAQKRMEQEADKSKKFALQKFARELLEIVDNLERAIENADANDPVAEGVQLTHKALLAVLHKNGIEVVDPQGEKFNADLHEAVDIDAEAEADTVGTVLQKGYSLNGRLLRPAMVRVGQ.

Residues 1-27 form a disordered region; that stretch reads MSEQNTNHESPEQNVAHDNIEHSDSIL. Positions 18–27 are enriched in basic and acidic residues; the sequence is DNIEHSDSIL.

It belongs to the GrpE family. In terms of assembly, homodimer.

Its subcellular location is the cytoplasm. In terms of biological role, participates actively in the response to hyperosmotic and heat shock by preventing the aggregation of stress-denatured proteins, in association with DnaK and GrpE. It is the nucleotide exchange factor for DnaK and may function as a thermosensor. Unfolded proteins bind initially to DnaJ; upon interaction with the DnaJ-bound protein, DnaK hydrolyzes its bound ATP, resulting in the formation of a stable complex. GrpE releases ADP from DnaK; ATP binding to DnaK triggers the release of the substrate protein, thus completing the reaction cycle. Several rounds of ATP-dependent interactions between DnaJ, DnaK and GrpE are required for fully efficient folding. The sequence is that of Protein GrpE from Psychrobacter sp. (strain St1).